Reading from the N-terminus, the 402-residue chain is Phosphoglycerate kinase (402 aa).

Residues 24–26, Arg-40, 63–66, Arg-122, and Arg-155 contribute to the substrate site; these read DFN and HFGR. ATP-binding positions include Lys-206, Gly-297, Glu-328, and 358-361; that span reads GGDS.

It belongs to the phosphoglycerate kinase family. In terms of assembly, monomer.

The protein localises to the cytoplasm. The catalysed reaction is (2R)-3-phosphoglycerate + ATP = (2R)-3-phospho-glyceroyl phosphate + ADP. It functions in the pathway carbohydrate degradation; glycolysis; pyruvate from D-glyceraldehyde 3-phosphate: step 2/5. This Prochlorococcus marinus (strain MIT 9515) protein is Phosphoglycerate kinase.